The primary structure comprises 259 residues: 5'-nucleotidase SurE 1 (259 aa).

Positions 16, 17, 48, and 101 each coordinate a divalent metal cation.

Belongs to the SurE nucleotidase family. Requires a divalent metal cation as cofactor.

The protein localises to the cytoplasm. It catalyses the reaction a ribonucleoside 5'-phosphate + H2O = a ribonucleoside + phosphate. Nucleotidase that shows phosphatase activity on nucleoside 5'-monophosphates. This chain is 5'-nucleotidase SurE 1, found in Burkholderia lata (strain ATCC 17760 / DSM 23089 / LMG 22485 / NCIMB 9086 / R18194 / 383).